Here is a 416-residue protein sequence, read N- to C-terminus: Exodeoxyribonuclease 7 large subunit (416 aa).

This sequence belongs to the XseA family. In terms of assembly, heterooligomer composed of large and small subunits.

The protein resides in the cytoplasm. It carries out the reaction Exonucleolytic cleavage in either 5'- to 3'- or 3'- to 5'-direction to yield nucleoside 5'-phosphates.. In terms of biological role, bidirectionally degrades single-stranded DNA into large acid-insoluble oligonucleotides, which are then degraded further into small acid-soluble oligonucleotides. This Nitratiruptor sp. (strain SB155-2) protein is Exodeoxyribonuclease 7 large subunit.